A 327-amino-acid chain; its full sequence is Apoptosis facilitator Bcl-2-like protein 14 (327 aa).

Position 44 is a phosphoserine (Ser44). The short motif at 212 to 226 (IVELLKYSGDQLERK) is the BH3 element. The BH2 signature appears at 308–315 (WIQQHGGW).

This sequence belongs to the Bcl-2 family. In terms of processing, phosphorylated by MELK, leading to inhibit its pro-apoptotic function. Isoform 1 is widely expressed. Isoform 2 is testis-specific.

It localises to the cytoplasm. The protein localises to the cytosol. The protein resides in the endomembrane system. Plays a role in apoptosis. The sequence is that of Apoptosis facilitator Bcl-2-like protein 14 (BCL2L14) from Homo sapiens (Human).